An 83-amino-acid chain; its full sequence is Large ribosomal subunit protein bL27 (83 aa).

The tract at residues 1-20 is disordered; the sequence is MAHKKGASSSRNGRDSNPQY. Residues 7-19 show a composition bias toward polar residues; it reads ASSSRNGRDSNPQ.

The protein belongs to the bacterial ribosomal protein bL27 family.

The polypeptide is Large ribosomal subunit protein bL27 (Bifidobacterium animalis subsp. lactis (strain AD011)).